A 545-amino-acid chain; its full sequence is Monocarboxylate transporter 8 (545 aa).

The tract at residues 1 to 98 (MALPSPASEE…VETRGTARGF (98 aa)) is disordered. The residue at position 2 (Ala-2) is an N-acetylalanine. At 2–102 (ALPSPASEEA…GTARGFQPPE (101 aa)) the chain is on the cytoplasmic side. Repeat copies occupy residues 29 to 50 (PVPE…PVPV) and 51 to 72 (PPPE…PLPE). Positions 29 to 72 (PVPEPEPEPEPEPEPDPEPVPVPPPEPQPEPEPQPLPDPAPLPE) are 2 X 22 AA approximate tandem repeats. Positions 33–45 (PEPEPEPEPEPDP) are enriched in acidic residues. Positions 46–70 (EPVPVPPPEPQPEPEPQPLPDPAPL) are enriched in pro residues. Residues 103–123 (GGFGWIVVFAATWCNGSIFGI) form a helical membrane-spanning segment. Over 124–149 (HNSVGILYSMLLEEEKEKNRQVEFQA) the chain is Extracellular. A helical membrane pass occupies residues 150 to 170 (AWVGALAMGMIFFCSPIVSIF). Residues 171 to 177 (TDRLGCR) are Cytoplasmic-facing. Residues 178 to 198 (ITATTGAAVAFIGLHTSSFTS) traverse the membrane as a helical segment. Residues 199 to 206 (SLSLRYFT) lie on the Extracellular side of the membrane. A helical transmembrane segment spans residues 207-227 (YGILFGCGCSFAFQPSLVILG). At 228–235 (HYFQRRLG) the chain is on the cytoplasmic side. Residues 236–256 (LANGVVSAGSSIFSMSFPFLI) traverse the membrane as a helical segment. Residues 257-264 (KMLGDKIK) lie on the Extracellular side of the membrane. The chain crosses the membrane as a helical span at residues 265–285 (LAQTFQVLSTFMFVLTLLSLT). At 286 to 328 (YRPLLPSSQDTPSKRGAHTLRQRFLVQFRKYFNMRVFRQRTYR) the chain is on the cytoplasmic side. A helical transmembrane segment spans residues 329–349 (IWAFGIAAAALGYFVPYVHLM). Topologically, residues 350 to 362 (KYVEDKFKEIKET) are extracellular. A helical transmembrane segment spans residues 363 to 383 (WVLLVCIGATSGLGRLVSGHI). Residues 384-392 (SDSIPGLKK) are Cytoplasmic-facing. Residues 393-413 (IYLQVLSFLLLGLMSMMIPLC) traverse the membrane as a helical segment. Over 414–415 (RD) the chain is Extracellular. The chain crosses the membrane as a helical span at residues 416 to 436 (FGGLIVVCLFLGLCDGFFITI). Topologically, residues 437-453 (MAPIAFELVGPMQASQA) are cytoplasmic. The chain crosses the membrane as a helical span at residues 454 to 474 (IGYLLGMMALPMIAGPPIAGL). At 475-483 (LRNCFGDYH) the chain is on the extracellular side. The chain crosses the membrane as a helical span at residues 484 to 504 (VAFYFAGVPPIIGAVILFFVP). Over 505–545 (LMHQRMFKKEQRDSSKDKMLSHDPDPNGELLPGSPTPEEPI) the chain is Cytoplasmic. Over residues 514–529 (EQRDSSKDKMLSHDPD) the composition is skewed to basic and acidic residues. The tract at residues 514 to 545 (EQRDSSKDKMLSHDPDPNGELLPGSPTPEEPI) is disordered. At Thr-540 the chain carries Phosphothreonine.

It belongs to the major facilitator superfamily. Monocarboxylate porter (TC 2.A.1.13) family. As to quaternary structure, monomer. Homodimer. Homooligomer. Expressed in cerebral microvessels.

The protein resides in the cell membrane. The protein localises to the apical cell membrane. The enzyme catalyses 3,3',5-triiodo-L-thyronine(out) = 3,3',5-triiodo-L-thyronine(in). The catalysed reaction is 3,3',5'-triiodo-L-thyronine(out) = 3,3',5'-triiodo-L-thyronine(in). It catalyses the reaction L-thyroxine(out) = L-thyroxine(in). It carries out the reaction 3,3'-diiodo-L-thyronine(out) = 3,3'-diiodo-L-thyronine(in). Specific thyroid hormone transmembrane transporter, that mediates both uptake and efflux of thyroid hormones across the cell membrane independently of pH or a Na(+) gradient. Major substrates are the iodothyronines T3 and T4 and to a lesser extent rT3 and 3,3-diiodothyronine (3,3'-T2). Acts as an important mediator of thyroid hormone transport, especially T3, through the blood-brain barrier. The protein is Monocarboxylate transporter 8 (Slc16a2) of Mus musculus (Mouse).